Here is a 666-residue protein sequence, read N- to C-terminus: Calcium/calmodulin-dependent protein kinase type II subunit beta (666 aa).

Residues 14-272 (YQLYEDIGKG…AHEALKHPWV (259 aa)) form the Protein kinase domain. Y17 carries the phosphotyrosine modification. Residues 20-28 (IGKGAFSVV) and K43 contribute to the ATP site. D136 serves as the catalytic Proton acceptor. The tract at residues 283–292 (HRQETVECLK) is autoinhibitory domain. T287 carries the post-translational modification Phosphothreonine; by autocatalysis. The segment at 291–301 (LKKFNARRKLK) is calmodulin-binding. A phosphothreonine; by autocatalysis mark is found at T306 and T307. The segment at 349-534 (ADGVKPQTNS…IPGPLPTPSR (186 aa)) is disordered. Over residues 354-369 (PQTNSTKNSAAATSPK) the composition is skewed to polar residues. Phosphoserine occurs at positions 367, 394, and 397. A phosphothreonine mark is found at T400 and T401. Over residues 432–447 (LPCPSPAPFSPLPAPS) the composition is skewed to pro residues. Positions 479 to 491 (SPALLGPLSSPSP) are enriched in low complexity. The segment covering 514–531 (PVGPPPCPSPTIPGPLPT) has biased composition (pro residues).

Belongs to the protein kinase superfamily. CAMK Ser/Thr protein kinase family. CaMK subfamily. In terms of assembly, CAMK2 is composed of 4 different chains: alpha (CAMK2A), beta (CAMK2B), gamma (CAMK2G), and delta (CAMK2D). The different isoforms assemble into homo- or heteromultimeric holoenzymes composed of 12 subunits with two hexameric rings stacked one on top of the other. Interacts with SYNGAP1 and CAMK2N2. Interacts with MPDZ. Interacts with FOXO3. Interacts (when in a kinase inactive state not associated with calmodulin) with ARC; leading to target ARC to inactive synapses. Interacts with CAMK2N1; this interaction requires CAMK2B activation by Ca(2+). Autophosphorylation of Thr-287 following activation by Ca(2+)/calmodulin. Phosphorylation of Thr-287 locks the kinase into an activated state. In terms of tissue distribution, widely expressed. Expressed in adult and fetal brain. Expression is slightly lower in fetal brain. Expressed in skeletal muscle.

The protein resides in the cytoplasm. The protein localises to the cytoskeleton. Its subcellular location is the microtubule organizing center. It localises to the centrosome. It is found in the sarcoplasmic reticulum membrane. The protein resides in the synapse. The catalysed reaction is L-seryl-[protein] + ATP = O-phospho-L-seryl-[protein] + ADP + H(+). It catalyses the reaction L-threonyl-[protein] + ATP = O-phospho-L-threonyl-[protein] + ADP + H(+). Its activity is regulated as follows. Activated by Ca(2+)/calmodulin. Binding of calmodulin results in conformational change that relieves intrasteric autoinhibition and allows autophosphorylation of Thr-287 which turns the kinase in a constitutively active form and confers to the kinase a Ca(2+)-independent activity. In terms of biological role, calcium/calmodulin-dependent protein kinase that functions autonomously after Ca(2+)/calmodulin-binding and autophosphorylation, and is involved in dendritic spine and synapse formation, neuronal plasticity and regulation of sarcoplasmic reticulum Ca(2+) transport in skeletal muscle. In neurons, plays an essential structural role in the reorganization of the actin cytoskeleton during plasticity by binding and bundling actin filaments in a kinase-independent manner. This structural function is required for correct targeting of CaMK2A, which acts downstream of NMDAR to promote dendritic spine and synapse formation and maintain synaptic plasticity which enables long-term potentiation (LTP) and hippocampus-dependent learning. In developing hippocampal neurons, promotes arborization of the dendritic tree and in mature neurons, promotes dendritic remodeling. Also regulates the migration of developing neurons. Participates in the modulation of skeletal muscle function in response to exercise. In slow-twitch muscles, is involved in regulation of sarcoplasmic reticulum (SR) Ca(2+) transport and in fast-twitch muscle participates in the control of Ca(2+) release from the SR through phosphorylation of triadin, a ryanodine receptor-coupling factor, and phospholamban (PLN/PLB), an endogenous inhibitor of SERCA2A/ATP2A2. In response to interferon-gamma (IFN-gamma) stimulation, catalyzes phosphorylation of STAT1, stimulating the JAK-STAT signaling pathway. Phosphorylates reticulophagy regulator RETREG1 at 'Ser-151' under endoplasmic reticulum stress conditions which enhances RETREG1 oligomerization and its membrane scission and reticulophagy activity. This Homo sapiens (Human) protein is Calcium/calmodulin-dependent protein kinase type II subunit beta (CAMK2B).